We begin with the raw amino-acid sequence, 430 residues long: UPF0597 protein Clos_2050 (430 aa).

Belongs to the UPF0597 family.

The polypeptide is UPF0597 protein Clos_2050 (Alkaliphilus oremlandii (strain OhILAs) (Clostridium oremlandii (strain OhILAs))).